We begin with the raw amino-acid sequence, 357 residues long: Ribosomal RNA large subunit methyltransferase M (357 aa).

Residues serine 183, 216–219 (APGG), aspartate 235, aspartate 255, and aspartate 271 contribute to the S-adenosyl-L-methionine site. Residue lysine 300 is the Proton acceptor of the active site.

The protein belongs to the class I-like SAM-binding methyltransferase superfamily. RNA methyltransferase RlmE family. RlmM subfamily. As to quaternary structure, monomer.

The protein localises to the cytoplasm. The enzyme catalyses cytidine(2498) in 23S rRNA + S-adenosyl-L-methionine = 2'-O-methylcytidine(2498) in 23S rRNA + S-adenosyl-L-homocysteine + H(+). Its function is as follows. Catalyzes the 2'-O-methylation at nucleotide C2498 in 23S rRNA. This Pseudomonas savastanoi pv. phaseolicola (strain 1448A / Race 6) (Pseudomonas syringae pv. phaseolicola (strain 1448A / Race 6)) protein is Ribosomal RNA large subunit methyltransferase M.